Reading from the N-terminus, the 170-residue chain is UPF0316 protein CLJ_B0679 (170 aa).

Helical transmembrane passes span 1–21 and 36–56; these read MLSYYAFIFFAKIMEVALMTI and IIGFIEVTIWLYVTSSVLSGI.

It belongs to the UPF0316 family.

It localises to the cell membrane. This Clostridium botulinum (strain 657 / Type Ba4) protein is UPF0316 protein CLJ_B0679.